The primary structure comprises 193 residues: Putative manganese efflux pump MntP (193 aa).

Helical transmembrane passes span 3-23, 41-61, 69-89, 107-127, 130-150, and 164-184; these read IFAV…VAVV, AAFG…GVSV, DHWI…LSGL, AGRN…AVGL, AILG…CAVI, and LCAL…AIAC.

It belongs to the MntP (TC 9.B.29) family.

The protein localises to the cell inner membrane. In terms of biological role, probably functions as a manganese efflux pump. This Desulfovibrio desulfuricans (strain ATCC 27774 / DSM 6949 / MB) protein is Putative manganese efflux pump MntP.